The following is an 880-amino-acid chain: Vacuole morphology and inheritance protein 14 (880 aa).

HEAT repeat units follow at residues 82–119 (RYLRNILPPVLACFGDQNDQVRFYACESLYNIAKIAKG) and 243–280 (SYLPSFLGGLFTFLGDSHKDVRTVTHTLMDSLLHEVDR). A disordered region spans residues 333 to 373 (SKPLSMETDDTKLSNTNETDDERHLTSQEQLLDSEATSQEP). Residues 359 to 372 (SQEQLLDSEATSQE) are compositionally biased toward polar residues. 3 HEAT repeats span residues 388-425 (LNFPEVITVLVNNLASSEAEIQLIALHWIQVILSISPN), 429-466 (PFLSKILSVLLKLLSDSDPHITEIAQLVNGQLLSLCSS), and 517-554 (KHNDSMFLTLLKSLSNRDSVLIEKALSLLQSLCSDSND). Residues Ser767, Ser805, and Ser867 each carry the phosphoserine modification. A disordered region spans residues 850 to 880 (EMESPNDNSSVILKDSGSLPFNRNVSDKLKK).

Belongs to the VAC14 family. Component of the PI(3,5)P2 regulatory complex, composed of ATG18, FIG4, FAB1, VAC14 and VAC7. VAC14 nucleates the assembly of the complex and serves as a scaffold.

The protein localises to the vacuole membrane. Its function is as follows. The PI(3,5)P2 regulatory complex regulates both the synthesis and turnover of phosphatidylinositol 3,5-bisphosphate (PtdIns(3,5)P2). Regulates the synthesis of PtdIns(3,5)P2 by positive activation of FAB1 and by controlling FIG4 localization. Required for FIG4-mediated turnover of PtdIns(3,5)P2 after hyperosmotic shock. Essential for the control of trafficking of some proteins to the vacuole lumen via the multivesicular body (MVB), and for maintenance of vacuole size and acidity. This Saccharomyces cerevisiae (strain ATCC 204508 / S288c) (Baker's yeast) protein is Vacuole morphology and inheritance protein 14 (VAC14).